We begin with the raw amino-acid sequence, 67 residues long: UPF0434 protein RALTA_A0561 (67 aa).

It belongs to the UPF0434 family.

In Cupriavidus taiwanensis (strain DSM 17343 / BCRC 17206 / CCUG 44338 / CIP 107171 / LMG 19424 / R1) (Ralstonia taiwanensis (strain LMG 19424)), this protein is UPF0434 protein RALTA_A0561.